Here is a 598-residue protein sequence, read N- to C-terminus: Elongation factor 4 (598 aa).

The tr-type G domain maps to 2-184; sequence KQIRNFSIIA…RLVKEIPAPE (183 aa). Residues 14–19 and 131–134 each bind GTP; these read DHGKST and NKID.

Belongs to the TRAFAC class translation factor GTPase superfamily. Classic translation factor GTPase family. LepA subfamily.

Its subcellular location is the cell inner membrane. It carries out the reaction GTP + H2O = GDP + phosphate + H(+). In terms of biological role, required for accurate and efficient protein synthesis under certain stress conditions. May act as a fidelity factor of the translation reaction, by catalyzing a one-codon backward translocation of tRNAs on improperly translocated ribosomes. Back-translocation proceeds from a post-translocation (POST) complex to a pre-translocation (PRE) complex, thus giving elongation factor G a second chance to translocate the tRNAs correctly. Binds to ribosomes in a GTP-dependent manner. The polypeptide is Elongation factor 4 (Photorhabdus laumondii subsp. laumondii (strain DSM 15139 / CIP 105565 / TT01) (Photorhabdus luminescens subsp. laumondii)).